Here is a 239-residue protein sequence, read N- to C-terminus: BURP domain-containing protein 6 (239 aa).

The first 19 residues, 1 to 19, serve as a signal peptide directing secretion; the sequence is MPGAIRDLINPVSSAASAS. A BURP domain is found at 28–239; sequence FFLEKDLFPG…PQDDMLWVRN (212 aa).

Expressed in leaves and shoot.

This Oryza sativa subsp. japonica (Rice) protein is BURP domain-containing protein 6 (BURP6).